We begin with the raw amino-acid sequence, 1330 residues long: Nephrocystin-3 (1330 aa).

A lipid anchor (N-myristoyl glycine) is attached at glycine 2. The stretch at 83–207 (ELEYAAAEYE…QRLQAQGIQV (125 aa)) forms a coiled coil. TPR repeat units lie at residues 471-504 (IPEE…AHEL), 885-918 (CLLN…KSAM), 920-942 (TEYF…MSCL), 943-976 (ADLY…RETA), 985-1018 (AQSL…SENA), 1027-1060 (AREL…HQKA), 1093-1126 (ARTL…RERV), 1135-1168 (AQSL…RRRA), 1177-1210 (AYTV…RQKS), 1219-1252 (ATAL…YEDS), and 1261-1294 (GETL…KEAE). Residues 1296 to 1330 (SLLGGKAPSRHSSSGDTFSLKTAHSPNVFLQQGQR) are disordered. Residues 1305–1330 (RHSSSGDTFSLKTAHSPNVFLQQGQR) are compositionally biased toward polar residues.

Interacts with NPHP1 and INVS/NPHP2. Interacts (when myristoylated) with UNC119 and UNC119B; interaction is required for localization to cilium. Interacts with CEP164. Component of a complex containing at least ANKS6, INVS, NEK8 and NPHP3. ANKS6 may organize complex assembly by linking INVS and NPHP3 to NEK8 and INVS may target the complex to the proximal ciliary axoneme. In terms of tissue distribution, widely expressed at low level. Expressed in heart, placenta, liver, skeletal muscle, kidney and pancreas. Expressed at very low level in brain and lung.

Its subcellular location is the cell projection. It localises to the cilium. Functionally, required for normal ciliary development and function. Inhibits disheveled-1-induced canonical Wnt-signaling activity and may also play a role in the control of non-canonical Wnt signaling which regulates planar cell polarity. Probably acts as a molecular switch between different Wnt signaling pathways. Required for proper convergent extension cell movements. The chain is Nephrocystin-3 (NPHP3) from Homo sapiens (Human).